Here is a 510-residue protein sequence, read N- to C-terminus: Propionyl-CoA carboxylase beta chain (510 aa).

The CoA carboxyltransferase N-terminal domain occupies 1 to 257 (MKDILQELEN…SNRTPAPVRP (257 aa)). Residues 1–504 (MKDILQELEN…NKKLANPWKK (504 aa)) are carboxyltransferase. Positions 264–504 (RIEDSLDTLI…NKKLANPWKK (241 aa)) constitute a CoA carboxyltransferase C-terminal domain.

Belongs to the AccD/PCCB family. Probably a dodecamer composed of six biotin-containing alpha subunits and six beta subunits.

The enzyme catalyses propanoyl-CoA + hydrogencarbonate + ATP = (S)-methylmalonyl-CoA + ADP + phosphate + H(+). Its pathway is metabolic intermediate metabolism; propanoyl-CoA degradation; succinyl-CoA from propanoyl-CoA: step 1/3. This chain is Propionyl-CoA carboxylase beta chain, found in Cereibacter sphaeroides (strain ATCC 17023 / DSM 158 / JCM 6121 / CCUG 31486 / LMG 2827 / NBRC 12203 / NCIMB 8253 / ATH 2.4.1.) (Rhodobacter sphaeroides).